Consider the following 1074-residue polypeptide: Fibrous sheath CABYR-binding protein (1074 aa).

A disordered region spans residues Met1–Tyr73. Ser25, Ser57, Ser186, and Ser275 each carry phosphoserine. Disordered stretches follow at residues Gln272–Val294 and Leu317–Pro343. Positions Pro274–Ala290 are enriched in low complexity. Ser365 is subject to Phosphoserine. Disordered stretches follow at residues Val437–Ser789 and Gly818–Thr982. Positions Pro448–Ser467 are enriched in low complexity. Residues Val528 to Leu544 are compositionally biased toward pro residues. A compositionally biased stretch (low complexity) spans Glu558 to Glu575. Pro residues-rich tracts occupy residues Phe576–Leu592 and Pro673–Ala688. Positions Thr689 to Val720 are enriched in low complexity. Position 1020 is a phosphoserine (Ser1020). The interval Ser1026–Thr1054 is disordered.

Interacts with CABYR. Interacts with ROPN1 and ROPN1L; the interaction increases upon spermatozoa capacitation conditions. Phosphorylated by PKA upon spermatozoa capacitation conditions. In terms of tissue distribution, expression is restricted to testis and epididymis, expressed by spermatozoa.

It is found in the cell projection. The protein localises to the cilium. It localises to the flagellum. May be involved in the later stages of fibrous sheath biogenesis and spermatozoa capacitation. Inhibits ROPN1 and ROPN1L SUMOylation. Binds calcium. The sequence is that of Fibrous sheath CABYR-binding protein from Mus musculus (Mouse).